The chain runs to 164 residues: Phosphopantetheine adenylyltransferase (164 aa).

Ser9 serves as a coordination point for substrate. Residues 9–10 and His17 each bind ATP; that span reads SF. Residues Lys41, Leu73, and Lys87 each contribute to the substrate site. Residues 88–90, Glu98, and 123–129 each bind ATP; these read GLR and YSYISSS.

It belongs to the bacterial CoaD family. In terms of assembly, homohexamer. It depends on Mg(2+) as a cofactor.

It is found in the cytoplasm. It catalyses the reaction (R)-4'-phosphopantetheine + ATP + H(+) = 3'-dephospho-CoA + diphosphate. Its pathway is cofactor biosynthesis; coenzyme A biosynthesis; CoA from (R)-pantothenate: step 4/5. In terms of biological role, reversibly transfers an adenylyl group from ATP to 4'-phosphopantetheine, yielding dephospho-CoA (dPCoA) and pyrophosphate. In Clostridium perfringens (strain 13 / Type A), this protein is Phosphopantetheine adenylyltransferase.